Reading from the N-terminus, the 154-residue chain is Large-conductance mechanosensitive channel (154 aa).

2 helical membrane-spanning segments follow: residues 12–32 (GNIV…ALIT) and 71–91 (IVLS…FLVV). The tract at residues 129 to 154 (NGAPSGRHVDTADLTPTPNHEPRADT) is disordered.

Belongs to the MscL family. As to quaternary structure, homopentamer.

The protein resides in the cell membrane. Its function is as follows. Channel that opens in response to stretch forces in the membrane lipid bilayer. May participate in the regulation of osmotic pressure changes within the cell. The chain is Large-conductance mechanosensitive channel from Mycobacterium leprae (strain Br4923).